Here is a 418-residue protein sequence, read N- to C-terminus: F-box protein At5g03970 (418 aa).

One can recognise an F-box domain in the interval 18-66 (STHEVLNSNDTMCEILILLPPETIYKLILVSKRWLEIIASPCFRHTYLA).

The protein is F-box protein At5g03970 of Arabidopsis thaliana (Mouse-ear cress).